A 592-amino-acid chain; its full sequence is Inactive heparanase-2 (592 aa).

An N-terminal signal peptide occupies residues 1–41; that stretch reads MRVLCAFPEAMPSSNSRPPACLAPGALYLALLLHLSLSSQA. Residues Asn254 and Asn392 are each glycosylated (N-linked (GlcNAc...) asparagine).

The protein belongs to the glycosyl hydrolase 79 family. Interacts with HPSE. Interacts with SDC1 (via glycan chains). In terms of tissue distribution, widely expressed, with the highest expression in brain, mammary gland, prostate, small intestine, testis and uterus. In the central nervous system, expressed in the spinal cord, caudate nucleus, thalamus, substantia nigra, medulla oblongata, putamen and pons. In the urinary bladder, expressed in longitudinal and circular layers of detrusor muscle. Found both in normal and cancer tissues.

The protein localises to the secreted. It is found in the extracellular space. Its subcellular location is the extracellular matrix. Functionally, binds heparin and heparan sulfate with high affinity, but lacks heparanase activity. Inhibits HPSE, possibly by competing for its substrates (in vitro). This is Inactive heparanase-2 (HPSE2) from Homo sapiens (Human).